The following is a 193-amino-acid chain: Peptidyl-tRNA hydrolase (193 aa).

Position 16 (Y16) interacts with tRNA. H21 (proton acceptor) is an active-site residue. TRNA contacts are provided by F66, N68, and N114.

It belongs to the PTH family. Monomer.

The protein localises to the cytoplasm. It carries out the reaction an N-acyl-L-alpha-aminoacyl-tRNA + H2O = an N-acyl-L-amino acid + a tRNA + H(+). Its function is as follows. Hydrolyzes ribosome-free peptidyl-tRNAs (with 1 or more amino acids incorporated), which drop off the ribosome during protein synthesis, or as a result of ribosome stalling. In terms of biological role, catalyzes the release of premature peptidyl moieties from peptidyl-tRNA molecules trapped in stalled 50S ribosomal subunits, and thus maintains levels of free tRNAs and 50S ribosomes. The polypeptide is Peptidyl-tRNA hydrolase (Trichlorobacter lovleyi (strain ATCC BAA-1151 / DSM 17278 / SZ) (Geobacter lovleyi)).